A 437-amino-acid polypeptide reads, in one-letter code: Glutamyl-tRNA reductase (437 aa).

Substrate-binding positions include 49–52 (TCNR), Ser-109, 114–116 (ETQ), and Gln-120. Cys-50 (nucleophile) is an active-site residue. 189–194 (GAGEMS) is an NADP(+) binding site.

It belongs to the glutamyl-tRNA reductase family. In terms of assembly, homodimer.

It catalyses the reaction (S)-4-amino-5-oxopentanoate + tRNA(Glu) + NADP(+) = L-glutamyl-tRNA(Glu) + NADPH + H(+). It participates in porphyrin-containing compound metabolism; protoporphyrin-IX biosynthesis; 5-aminolevulinate from L-glutamyl-tRNA(Glu): step 1/2. Catalyzes the NADPH-dependent reduction of glutamyl-tRNA(Glu) to glutamate 1-semialdehyde (GSA). The polypeptide is Glutamyl-tRNA reductase (Listeria welshimeri serovar 6b (strain ATCC 35897 / DSM 20650 / CCUG 15529 / CIP 8149 / NCTC 11857 / SLCC 5334 / V8)).